The following is a 689-amino-acid chain: MSEKTFLVEIGTEELPPKALRSLAESFAANFTAELDNAGLAHGTVQWFAAPRRLALKVANLAEAQPDREIEKRGPAIAQAFDAEGKPSKAAEGWARGCGITVDQAERLTTDKGEWLLYRAHVKGESTEALLPNMVATSLAKLPIPKLMRWGASDVHFVRPVHTVTLLLGDKVIPATILGIQSDRVIRGHRFMGEPEFAIDNADQYPEILRERGKVIADYEERKAKIKADAEEAARKIGGNADLSESLLEEVASLVEWPVVLTAKFEEKFLAVPSEALVYTMKGDQKYFPVYANDGKLLPNFIFVANIESKDQQQIISGNEKVVRPRLADAEFFFNTDRKKRLEDNLPRLQTVLFQLQLGTLRDKTDRIQALAGWIAEQIGADVNHATRAGLLSKCDLMTNMVFEFTDTQGVMGMHYARHDGEAEDVAVALNEQYQPRFAGDDLPSNPVACALAIADKMDTLAGIFGIGQHPKGDKDPFALRRAALGVLRIIVEKNLNLDLQTLTEEAVRLYGDKLTNANVVDDVIDFMLGRFRAWYQDEGYTVDTIQAVLARRPTRPADFDARMKAVSHFRTLEAAAALAAANKRVSNILAKSDEVLSDRVNASTLKEPEEIKLAMQVVVLRDKLEPYFAEGRYQDALVELAELREPVDAFFDKVMVMVDDKELRINRLTMLEKLRELFLRVADISLLQ.

It belongs to the class-II aminoacyl-tRNA synthetase family. In terms of assembly, tetramer of two alpha and two beta subunits.

The protein localises to the cytoplasm. The enzyme catalyses tRNA(Gly) + glycine + ATP = glycyl-tRNA(Gly) + AMP + diphosphate. This chain is Glycine--tRNA ligase beta subunit, found in Shigella dysenteriae serotype 1 (strain Sd197).